A 47-amino-acid chain; its full sequence is Large ribosomal subunit protein bL33 (47 aa).

Belongs to the bacterial ribosomal protein bL33 family.

The protein is Large ribosomal subunit protein bL33 of Staphylococcus saprophyticus.